A 329-amino-acid polypeptide reads, in one-letter code: tRNA uridine(34) hydroxylase (329 aa).

The Rhodanese domain occupies 123-217 (SDPETVLIDT…YLEEVPKEKS (95 aa)). The active-site Cysteine persulfide intermediate is the Cys177. The tract at residues 310 to 329 (LNKQKKQQAKEAARKKTEKN) is disordered. Basic and acidic residues predominate over residues 317 to 329 (QAKEAARKKTEKN).

This sequence belongs to the TrhO family.

It carries out the reaction uridine(34) in tRNA + AH2 + O2 = 5-hydroxyuridine(34) in tRNA + A + H2O. In terms of biological role, catalyzes oxygen-dependent 5-hydroxyuridine (ho5U) modification at position 34 in tRNAs. The protein is tRNA uridine(34) hydroxylase of Francisella tularensis subsp. novicida (strain U112).